The following is a 643-amino-acid chain: tRNA 5-methylaminomethyl-2-thiouridine biosynthesis bifunctional protein MnmC (643 aa).

The interval 1–223 is tRNA (mnm(5)s(2)U34)-methyltransferase; it reads MPDRLVSATL…VDDRLVGDYA (223 aa). The FAD-dependent cmnm(5)s(2)U34 oxidoreductase stretch occupies residues 247–643; sequence IGAGLAGCAV…LRARRVGSAG (397 aa).

In the N-terminal section; belongs to the methyltransferase superfamily. tRNA (mnm(5)s(2)U34)-methyltransferase family. The protein in the C-terminal section; belongs to the DAO family. FAD serves as cofactor.

Its subcellular location is the cytoplasm. The enzyme catalyses 5-aminomethyl-2-thiouridine(34) in tRNA + S-adenosyl-L-methionine = 5-methylaminomethyl-2-thiouridine(34) in tRNA + S-adenosyl-L-homocysteine + H(+). Catalyzes the last two steps in the biosynthesis of 5-methylaminomethyl-2-thiouridine (mnm(5)s(2)U) at the wobble position (U34) in tRNA. Catalyzes the FAD-dependent demodification of cmnm(5)s(2)U34 to nm(5)s(2)U34, followed by the transfer of a methyl group from S-adenosyl-L-methionine to nm(5)s(2)U34, to form mnm(5)s(2)U34. The chain is tRNA 5-methylaminomethyl-2-thiouridine biosynthesis bifunctional protein MnmC from Burkholderia orbicola (strain MC0-3).